Consider the following 534-residue polypeptide: Nucleolar protein 58 (534 aa).

Thr-34 bears the Phosphothreonine mark. Ser-109 is subject to Phosphoserine. Lys-157 participates in a covalent cross-link: Glycyl lysine isopeptide (Lys-Gly) (interchain with G-Cter in SUMO2). The Nop domain maps to 282-400 (IAPNVTVMVG…LEARLRILED (119 aa)). 2 positions are modified to phosphoserine: Ser-304 and Ser-351. Residues Lys-353, Lys-411, Lys-415, Lys-422, Lys-426, Lys-441, Lys-444, and Lys-465 each participate in a glycyl lysine isopeptide (Lys-Gly) (interchain with G-Cter in SUMO2) cross-link. A Glycyl lysine isopeptide (Lys-Gly) (interchain with G-Cter in SUMO); alternate cross-link involves residue Lys-467. Lys-467 participates in a covalent cross-link: Glycyl lysine isopeptide (Lys-Gly) (interchain with G-Cter in SUMO1); alternate. A Glycyl lysine isopeptide (Lys-Gly) (interchain with G-Cter in SUMO2); alternate cross-link involves residue Lys-467. Residues 470-486 (VEEEMEEAEEEQVVEEE) are compositionally biased toward acidic residues. The tract at residues 470–534 (VEEEMEEAEE…KKKKKKDAED (65 aa)) is disordered. A Glycyl lysine isopeptide (Lys-Gly) (interchain with G-Cter in SUMO2) cross-link involves residue Lys-490. Basic residues predominate over residues 490-500 (KKKKKKDKKKH). Residue Lys-502 forms a Glycyl lysine isopeptide (Lys-Gly) (interchain with G-Cter in SUMO); alternate linkage. A Glycyl lysine isopeptide (Lys-Gly) (interchain with G-Cter in SUMO2); alternate cross-link involves residue Lys-502. Residues Ser-507 and Ser-519 each carry the phosphoserine modification. Basic residues predominate over residues 522–534 (KKKKKKKKKDAED).

It belongs to the NOP5/NOP56 family. Core component of box C/D small nucleolar ribonucleoprotein (snoRNP) particles; the core proteins SNU13, NOP56, NOP58 and FBL or FBLL1 assemble stepwise onto the snoRNA. Interacts with NOLC1/Nopp140. Interacts with NOPCHAP1, NUFIP1, RUVBL1 and RUVBL2; NOPCHAP1 bridges the association of NOP58 with RUVBL1:RUVBL2 and NUFIP1. Interacts with PIH1D1. Part of the small subunit (SSU) processome, composed of more than 70 proteins and the RNA chaperone small nucleolar RNA (snoRNA) U3. Sumoylation is essential for high-affinity binding to snoRNAs.

The protein resides in the nucleus. It is found in the nucleolus. Its subcellular location is the nucleoplasm. Its function is as follows. Required for the biogenesis of box C/D snoRNAs such as U3, U8 and U14 snoRNAs. Part of the small subunit (SSU) processome, first precursor of the small eukaryotic ribosomal subunit. During the assembly of the SSU processome in the nucleolus, many ribosome biogenesis factors, an RNA chaperone and ribosomal proteins associate with the nascent pre-rRNA and work in concert to generate RNA folding, modifications, rearrangements and cleavage as well as targeted degradation of pre-ribosomal RNA by the RNA exosome. Core component of box C/D small nucleolar ribonucleoprotein (snoRNP) complexes that function in methylation of multiple sites on ribosomal RNAs (rRNAs) and messenger RNAs (mRNAs). The protein is Nucleolar protein 58 (Nop58) of Rattus norvegicus (Rat).